Here is a 552-residue protein sequence, read N- to C-terminus: Hydroxylamine reductase (552 aa).

Residues Cys-3, Cys-6, Cys-15, and Cys-21 each contribute to the [4Fe-4S] cluster site. Positions 247, 271, 315, 407, 435, 460, 495, and 497 each coordinate hybrid [4Fe-2O-2S] cluster. Cys-407 bears the Cysteine persulfide mark.

Belongs to the HCP family. [4Fe-4S] cluster serves as cofactor. Requires hybrid [4Fe-2O-2S] cluster as cofactor.

It is found in the cytoplasm. The catalysed reaction is A + NH4(+) + H2O = hydroxylamine + AH2 + H(+). Functionally, catalyzes the reduction of hydroxylamine to form NH(3) and H(2)O. The chain is Hydroxylamine reductase from Thermosipho melanesiensis (strain DSM 12029 / CIP 104789 / BI429).